The following is a 511-amino-acid chain: FAD-dependent monooxygenase AOL_s00215g279 (511 aa).

A signal peptide spans 1-17 (MRFTLYGLLGFASLLHA). Residues 85–256 (CWVNPACIVS…TEFDLRTRYS (172 aa)) enclose the FAD-binding PCMH-type domain. Histidine 122 is subject to Pros-8alpha-FAD histidine.

The protein belongs to the oxygen-dependent FAD-linked oxidoreductase family.

It participates in secondary metabolite biosynthesis; terpenoid biosynthesis. FAD-dependent monooxygenase; part of the gene cluster that mediates the biosynthesis of sesquiterpenyl epoxy-cyclohexenoids (SECs) such as anthrobotrisins and arthrosporols, metabolites that possess a novel hybrid carbon skeleton consisting of a polyketide-derived epoxycyclohexenol combined with a terpenoid-derived monocyclic sesquiterpenol substructure (PKS-PTS hybrid). The SEC pathway plays an important role for fungal soil colonization via decreasing fungal nematode-capturing ability. Within the pathway, the FAD-dependent monooxygenase AOL_s00215g279 plays a role in the oxygenation of the phenol moiety, most likely in the epoxy formation. The pathway begins with the biosynthesis of 6-methylsalicylic acid (6-MSA), the first precursor of the polyketide-derived epoxycyclohexenol in arthrosporols, by the polyketide synthase (PKS) AOL_s00215g283 via condensation of 1 acetate and 3 malonate units. The 6-methylsalicylic acid decarboxylase AOL_s00215g281 then catalyzes the decarboxylation of 6-methylsalicylic acid to yield m-cresol. The cytochrome P450 monooxygenase AOL_s00215g282 further oxidizes m-cresol to yield toluquinol. With the assistance of the oxidoreductase AOL_s00215g277, the polyprenyl transferase AOL_s00215g276 catalyzes the farnesylation of toluquinol to produce farnesyl hydroquinone, the hybrid precursor for biosynthesis of SECs. Farnesyl hydroquinone undergoes epoxidation and then subsequent dehydrogenation to form farnesyl epoxy-quinone, the first and simplest SEC. The cytochrome P450 monooxygenase AOL_s00215g278 and the FAD-dependent monooxygenase AOL_s00215g279 might be involved in the oxygenation of the phenol moiety, most likely in the epoxy formation. The cytochrome P450 monooxygenases AOL_s00215g274 and AOL_s00215g280 are involved in specific regional ketone reductions at respectively C-4 and C-1 of farnesyl epoxy-quinone PubMed:33823587. This Arthrobotrys oligospora (strain ATCC 24927 / CBS 115.81 / DSM 1491) (Nematode-trapping fungus) protein is FAD-dependent monooxygenase AOL_s00215g279.